Consider the following 140-residue polypeptide: Putative pre-16S rRNA nuclease (140 aa).

Belongs to the YqgF nuclease family.

It is found in the cytoplasm. Functionally, could be a nuclease involved in processing of the 5'-end of pre-16S rRNA. The chain is Putative pre-16S rRNA nuclease from Halothermothrix orenii (strain H 168 / OCM 544 / DSM 9562).